The primary structure comprises 394 residues: Bone morphogenetic protein 2 (394 aa).

Positions Met-1 to Gly-19 are cleaved as a signal peptide. A propeptide spans Gly-20–Arg-280 (cleaved by PCSK5). A Phosphoserine modification is found at Ser-86. 3 N-linked (GlcNAc...) asparagine glycosylation sites follow: Asn-134, Asn-162, and Asn-198. The segment at Gly-269–Lys-291 is disordered. The segment covering His-272–Lys-291 has biased composition (basic residues). Cystine bridges form between Cys-294–Cys-359, Cys-323–Cys-391, and Cys-327–Cys-393. N-linked (GlcNAc...) asparagine glycosylation is present at Asn-336.

The protein belongs to the TGF-beta family. Homodimer; disulfide-linked. Interacts with SOSTDC1. Interacts with GREM2, RGMA, RGMB and RGMC. Interacts with ASPN. Interacts with MAFP5. Interacts with FBN1 (via N-terminal domain) and FBN2. Interacts with type I receptor BMPR1A. Interacts with type II receptor BMPR2. Interacts with SCUBE3. Interacts with TNFAIP6 (primarily via Link domain); this interaction is inhibited by hyaluronan. Interacts with ERFE. Interacts with BMPR1A/ALK3; the interaction may induce HAMP expression. Forms heterodimers with BMP6 in vitro; the heterodimer then binds to its receptor BMPR1A /ALK3 and may induce HAMP expression. Interacts with TGFBR3.

The protein localises to the secreted. Functionally, growth factor of the TGF-beta superfamily that plays essential roles in many developmental processes, including cardiogenesis, neurogenesis, and osteogenesis. Induces cartilage and bone formation. Initiates the canonical BMP signaling cascade by associating with type I receptor BMPR1A and type II receptor BMPR2. Once all three components are bound together in a complex at the cell surface, BMPR2 phosphorylates and activates BMPR1A. In turn, BMPR1A propagates signal by phosphorylating SMAD1/5/8 that travel to the nucleus and act as activators and repressors of transcription of target genes. Also acts to promote expression of HAMP, via the interaction with its receptor BMPR1A/ALK3. Can also signal through non-canonical pathways such as ERK/MAP kinase signaling cascade that regulates osteoblast differentiation. Also stimulates the differentiation of myoblasts into osteoblasts via the EIF2AK3-EIF2A-ATF4 pathway by stimulating EIF2A phosphorylation which leads to increased expression of ATF4 which plays a central role in osteoblast differentiation. Acts as a positive regulator of odontoblast differentiation during mesenchymal tooth germ formation, expression is repressed during the bell stage by MSX1-mediated inhibition of CTNNB1 signaling. In Mus musculus (Mouse), this protein is Bone morphogenetic protein 2 (Bmp2).